Consider the following 228-residue polypeptide: 7-cyano-7-deazaguanine synthase (228 aa).

Position 9-19 (9-19) interacts with ATP; that stretch reads YSGGLDSTTCM. 4 residues coordinate Zn(2+): Cys189, Cys199, Cys202, and Cys205.

Belongs to the QueC family. Zn(2+) serves as cofactor.

The enzyme catalyses 7-carboxy-7-deazaguanine + NH4(+) + ATP = 7-cyano-7-deazaguanine + ADP + phosphate + H2O + H(+). The protein operates within purine metabolism; 7-cyano-7-deazaguanine biosynthesis. Catalyzes the ATP-dependent conversion of 7-carboxy-7-deazaguanine (CDG) to 7-cyano-7-deazaguanine (preQ(0)). This Geotalea uraniireducens (strain Rf4) (Geobacter uraniireducens) protein is 7-cyano-7-deazaguanine synthase.